The following is a 74-amino-acid chain: Putative ribosome-binding protein YbzG (74 aa).

This chain is Putative ribosome-binding protein YbzG (ybzG), found in Bacillus subtilis (strain 168).